Here is a 371-residue protein sequence, read N- to C-terminus: Spermidine/putrescine import ATP-binding protein PotA (371 aa).

Positions 10-240 (VELRNVTKSY…PKNLFVARFI (231 aa)) constitute an ABC transporter domain. 42–49 (GPSGCGKT) serves as a coordination point for ATP.

Belongs to the ABC transporter superfamily. Spermidine/putrescine importer (TC 3.A.1.11.1) family. As to quaternary structure, the complex is composed of two ATP-binding proteins (PotA), two transmembrane proteins (PotB and PotC) and a solute-binding protein (PotD).

The protein resides in the cell inner membrane. The catalysed reaction is ATP + H2O + polyamine-[polyamine-binding protein]Side 1 = ADP + phosphate + polyamineSide 2 + [polyamine-binding protein]Side 1.. Its function is as follows. Part of the ABC transporter complex PotABCD involved in spermidine/putrescine import. Responsible for energy coupling to the transport system. The chain is Spermidine/putrescine import ATP-binding protein PotA from Haemophilus ducreyi (strain 35000HP / ATCC 700724).